A 182-amino-acid chain; its full sequence is Phospholipase A2 inhibitor gamma subunit A (182 aa).

Intrachain disulfides connect C3–C27, C6–C13, C20–C48, C54–C75, C76–C81, C99–C124, C117–C146, and C150–C172. N-linked (GlcNAc...) asparagine glycosylation is present at N157.

The protein belongs to the CNF-like-inhibitor family. As to quaternary structure, heterotrimer of 2 subunits A and 1 subunit B. Post-translationally, N-glycosylation is not important for activity, since deglycosylation does not change its PLA2 inhibitory activity. Expressed by the liver.

Its subcellular location is the secreted. In terms of biological role, strongly inhibits its own venom PLA2 and all other PLA2s tested including Elapid, Crotalid and Viperid venom PLA2s, as well as honeybee PLA2s. This chain is Phospholipase A2 inhibitor gamma subunit A, found in Laticauda semifasciata (Black-banded sea krait).